The chain runs to 257 residues: Probable ssDNA-binding protein (257 aa).

Positions 222-257 (AFMEGRENKDDDAKSGNSNAGSQKGIDQEAASDLDD) are disordered. The segment covering 225-235 (EGRENKDDDAK) has biased composition (basic and acidic residues).

In terms of biological role, required during DNA replication. Displaced viral DNA strands are transiently coated with the ssDNA-binding protein. It is then probably removed by the replisome that performs lagging strand synthesis or during the events that lead up to the recombination process. This chain is Probable ssDNA-binding protein (D11), found in Escherichia phage T5 (Enterobacteria phage T5).